We begin with the raw amino-acid sequence, 173 residues long: 16S rRNA aminocarboxypropyltransferase (173 aa).

Residues T25, L72, L96, and S115 each coordinate S-adenosyl-L-methionine.

It belongs to the TDD superfamily. TSR3 family.

Its subcellular location is the cytoplasm. The enzyme catalyses an N(1)-methylpseudouridine in rRNA + S-adenosyl-L-methionine = N(1)-methyl-N(3)-[(3S)-3-amino-3-carboxypropyl]pseudouridine in rRNA + S-methyl-5'-thioadenosine + H(+). Aminocarboxypropyltransferase that catalyzes the aminocarboxypropyl transfer on pseudouridine corresponding to position 914 in M.jannaschii 16S rRNA. It constitutes the last step in biosynthesis of the hypermodified N1-methyl-N3-(3-amino-3-carboxypropyl) pseudouridine (m1acp3-Psi). The polypeptide is 16S rRNA aminocarboxypropyltransferase (Methanosarcina mazei (strain ATCC BAA-159 / DSM 3647 / Goe1 / Go1 / JCM 11833 / OCM 88) (Methanosarcina frisia)).